Here is a 301-residue protein sequence, read N- to C-terminus: Cytochrome c biogenesis protein CcsA (301 aa).

8 helical membrane-spanning segments follow: residues 13–33 (NNITFLTLLISLISYWLGLIF), 39–59 (VFYIGYGSTILACITITIILG), 73–93 (LYESLMFLTWGLLFSAIYLEY), 97–117 (LYLIGAIVSPISLFIVSFSTL), 146–166 (MLSYSTLIIGSLLAILYLVLI), 209–229 (TIGFGFPLLTIGIIAGAVWAN), 236–256 (WSWDPKETWALITWLVFAAYL), and 270–290 (AYLAALGFVVVWICYLGVNFL).

The protein belongs to the CcmF/CycK/Ccl1/NrfE/CcsA family. In terms of assembly, may interact with Ccs1.

It localises to the plastid. The protein localises to the chloroplast thylakoid membrane. In terms of biological role, required during biogenesis of c-type cytochromes (cytochrome c6 and cytochrome f) at the step of heme attachment. This Guillardia theta (Cryptophyte) protein is Cytochrome c biogenesis protein CcsA.